The following is a 261-amino-acid chain: Indole-3-glycerol phosphate synthase (261 aa).

The protein belongs to the TrpC family.

The enzyme catalyses 1-(2-carboxyphenylamino)-1-deoxy-D-ribulose 5-phosphate + H(+) = (1S,2R)-1-C-(indol-3-yl)glycerol 3-phosphate + CO2 + H2O. The protein operates within amino-acid biosynthesis; L-tryptophan biosynthesis; L-tryptophan from chorismate: step 4/5. The polypeptide is Indole-3-glycerol phosphate synthase (Burkholderia mallei (strain NCTC 10247)).